The chain runs to 305 residues: Probable 4-deoxy-4-formamido-L-arabinose-phosphoundecaprenol deformylase ArnD (305 aa).

In terms of domain architecture, NodB homology spans 7 to 262 (TKVGLRIDVD…QAKENNIEFV (256 aa)).

The protein belongs to the polysaccharide deacetylase family. ArnD deformylase subfamily.

The catalysed reaction is 4-deoxy-4-formamido-alpha-L-arabinopyranosyl di-trans,octa-cis-undecaprenyl phosphate + H2O = 4-amino-4-deoxy-alpha-L-arabinopyranosyl di-trans,octa-cis-undecaprenyl phosphate + formate. It participates in glycolipid biosynthesis; 4-amino-4-deoxy-alpha-L-arabinose undecaprenyl phosphate biosynthesis; 4-amino-4-deoxy-alpha-L-arabinose undecaprenyl phosphate from UDP-4-deoxy-4-formamido-beta-L-arabinose and undecaprenyl phosphate: step 2/2. Its pathway is bacterial outer membrane biogenesis; lipopolysaccharide biosynthesis. Catalyzes the deformylation of 4-deoxy-4-formamido-L-arabinose-phosphoundecaprenol to 4-amino-4-deoxy-L-arabinose-phosphoundecaprenol. The modified arabinose is attached to lipid A and is required for resistance to polymyxin and cationic antimicrobial peptides. This chain is Probable 4-deoxy-4-formamido-L-arabinose-phosphoundecaprenol deformylase ArnD, found in Shewanella sediminis (strain HAW-EB3).